Consider the following 130-residue polypeptide: Putative antitoxin VapB50 (130 aa).

In terms of biological role, possibly the antitoxin component of a type II toxin-antitoxin (TA) system. Its cognate toxin is VapC50. The sequence is that of Putative antitoxin VapB50 from Mycobacterium tuberculosis (strain ATCC 25618 / H37Rv).